Here is a 29-residue protein sequence, read N- to C-terminus: NAD-reducing hydrogenase HoxS subunit delta (29 aa).

Residues 1-11 show a composition bias toward basic and acidic residues; it reads MKHSEKNEIAS. The segment at 1 to 29 is disordered; sequence MKHSEKNEIASHELPTTPLDPVLAAGRES.

This sequence belongs to the [NiFe]/[NiFeSe] hydrogenase small subunit family. Tetramer of an alpha and a gamma subunits (flavin-containing dimer), and a delta and a nickel-containing beta subunits (hydrogenase dimer). The cofactor is [4Fe-4S] cluster. [3Fe-4S] cluster serves as cofactor. [2Fe-2S] cluster is required as a cofactor. It depends on FMN as a cofactor. Requires Ni(2+) as cofactor.

It localises to the cytoplasm. It catalyses the reaction H2 + NAD(+) = NADH + H(+). In Rhodococcus opacus (Nocardia opaca), this protein is NAD-reducing hydrogenase HoxS subunit delta (hoxY).